Consider the following 159-residue polypeptide: RNA pyrophosphohydrolase (159 aa).

The Nudix hydrolase domain maps to 6 to 149 (GFRPNVGIIL…KREVYRRALK (144 aa)). The Nudix box signature appears at 38–59 (GGINPDETPEDALYRELNEEVG).

Belongs to the Nudix hydrolase family. RppH subfamily. It depends on a divalent metal cation as a cofactor.

In terms of biological role, accelerates the degradation of transcripts by removing pyrophosphate from the 5'-end of triphosphorylated RNA, leading to a more labile monophosphorylated state that can stimulate subsequent ribonuclease cleavage. The sequence is that of RNA pyrophosphohydrolase from Pseudomonas putida (strain ATCC 700007 / DSM 6899 / JCM 31910 / BCRC 17059 / LMG 24140 / F1).